A 508-amino-acid chain; its full sequence is Glycerol kinase (508 aa).

T14 contributes to the ADP binding site. T14, T15, and S16 together coordinate ATP. T14 serves as a coordination point for sn-glycerol 3-phosphate. Position 18 (R18) interacts with ADP. R84, E85, and Y136 together coordinate sn-glycerol 3-phosphate. Residues R84, E85, and Y136 each coordinate glycerol. Residue H232 is modified to Phosphohistidine; by HPr. D246 contacts sn-glycerol 3-phosphate. Positions 246 and 247 each coordinate glycerol. The ADP site is built by T268 and G311. ATP-binding residues include T268, G311, Q315, and G412. G412 and N416 together coordinate ADP.

It belongs to the FGGY kinase family. Homotetramer and homodimer (in equilibrium). Post-translationally, the phosphoenolpyruvate-dependent sugar phosphotransferase system (PTS), including enzyme I, and histidine-containing protein (HPr) are required for the phosphorylation, which leads to the activation of the enzyme.

The catalysed reaction is glycerol + ATP = sn-glycerol 3-phosphate + ADP + H(+). It participates in polyol metabolism; glycerol degradation via glycerol kinase pathway; sn-glycerol 3-phosphate from glycerol: step 1/1. Its activity is regulated as follows. Activated by phosphorylation and inhibited by fructose 1,6-bisphosphate (FBP). Key enzyme in the regulation of glycerol uptake and metabolism. Catalyzes the phosphorylation of glycerol to yield sn-glycerol 3-phosphate. In Streptococcus pyogenes serotype M4 (strain MGAS10750), this protein is Glycerol kinase.